The following is a 485-amino-acid chain: Glutamyl-tRNA(Gln) amidotransferase subunit A (485 aa).

Residues K78 and S153 each act as charge relay system in the active site. The Acyl-ester intermediate role is filled by S177.

Belongs to the amidase family. GatA subfamily. In terms of assembly, heterotrimer of A, B and C subunits.

The enzyme catalyses L-glutamyl-tRNA(Gln) + L-glutamine + ATP + H2O = L-glutaminyl-tRNA(Gln) + L-glutamate + ADP + phosphate + H(+). Functionally, allows the formation of correctly charged Gln-tRNA(Gln) through the transamidation of misacylated Glu-tRNA(Gln) in organisms which lack glutaminyl-tRNA synthetase. The reaction takes place in the presence of glutamine and ATP through an activated gamma-phospho-Glu-tRNA(Gln). The chain is Glutamyl-tRNA(Gln) amidotransferase subunit A from Bacillus cereus (strain 03BB102).